Consider the following 279-residue polypeptide: Protease HtpX homolog (279 aa).

2 helical membrane passes run 4-24 and 34-54; these read IFLFLATNIAVLVVINIVLAV and GSLLAYSAVVGFTGSIISLLM. Residue histidine 140 coordinates Zn(2+). Glutamate 141 is a catalytic residue. Residue histidine 144 coordinates Zn(2+). A run of 2 helical transmembrane segments spans residues 155–175 and 189–209; these read LIQGVVNTFVVFLSRIIANLI and FLVSMVFQILFGFLASLIVMW. Glutamate 215 is a binding site for Zn(2+).

It belongs to the peptidase M48B family. Zn(2+) serves as cofactor.

The protein resides in the cell inner membrane. The protein is Protease HtpX homolog of Neisseria gonorrhoeae (strain ATCC 700825 / FA 1090).